Consider the following 241-residue polypeptide: 1-(5-phosphoribosyl)-5-[(5-phosphoribosylamino)methylideneamino] imidazole-4-carboxamide isomerase (241 aa).

Asp-8 serves as the catalytic Proton acceptor. Asp-129 functions as the Proton donor in the catalytic mechanism.

It belongs to the HisA/HisF family.

Its subcellular location is the cytoplasm. The enzyme catalyses 1-(5-phospho-beta-D-ribosyl)-5-[(5-phospho-beta-D-ribosylamino)methylideneamino]imidazole-4-carboxamide = 5-[(5-phospho-1-deoxy-D-ribulos-1-ylimino)methylamino]-1-(5-phospho-beta-D-ribosyl)imidazole-4-carboxamide. Its pathway is amino-acid biosynthesis; L-histidine biosynthesis; L-histidine from 5-phospho-alpha-D-ribose 1-diphosphate: step 4/9. This is 1-(5-phosphoribosyl)-5-[(5-phosphoribosylamino)methylideneamino] imidazole-4-carboxamide isomerase from Caulobacter sp. (strain K31).